Reading from the N-terminus, the 120-residue chain is Large ribosomal subunit protein bL19 (120 aa).

Belongs to the bacterial ribosomal protein bL19 family.

This protein is located at the 30S-50S ribosomal subunit interface and may play a role in the structure and function of the aminoacyl-tRNA binding site. The protein is Large ribosomal subunit protein bL19 of Cyanothece sp. (strain PCC 7425 / ATCC 29141).